The chain runs to 298 residues: Lipoyl synthase (298 aa).

Residues cysteine 40, cysteine 45, cysteine 51, cysteine 67, cysteine 71, cysteine 74, and serine 280 each contribute to the [4Fe-4S] cluster site. A Radical SAM core domain is found at 53–269; that stretch reads AVRRTATFMI…KEIALSKGFS (217 aa).

It belongs to the radical SAM superfamily. Lipoyl synthase family. [4Fe-4S] cluster serves as cofactor.

The protein localises to the cytoplasm. The enzyme catalyses [[Fe-S] cluster scaffold protein carrying a second [4Fe-4S](2+) cluster] + N(6)-octanoyl-L-lysyl-[protein] + 2 oxidized [2Fe-2S]-[ferredoxin] + 2 S-adenosyl-L-methionine + 4 H(+) = [[Fe-S] cluster scaffold protein] + N(6)-[(R)-dihydrolipoyl]-L-lysyl-[protein] + 4 Fe(3+) + 2 hydrogen sulfide + 2 5'-deoxyadenosine + 2 L-methionine + 2 reduced [2Fe-2S]-[ferredoxin]. It functions in the pathway protein modification; protein lipoylation via endogenous pathway; protein N(6)-(lipoyl)lysine from octanoyl-[acyl-carrier-protein]. Catalyzes the radical-mediated insertion of two sulfur atoms into the C-6 and C-8 positions of the octanoyl moiety bound to the lipoyl domains of lipoate-dependent enzymes, thereby converting the octanoylated domains into lipoylated derivatives. This chain is Lipoyl synthase, found in Geobacillus kaustophilus (strain HTA426).